The primary structure comprises 694 residues: Elongation factor G (694 aa).

Positions 9–288 constitute a tr-type G domain; sequence DAIRNIGIMA…VIVKWLPSPL (280 aa). GTP is bound by residues 18-25, 82-86, and 136-139; these read AHIDAGKT, DTPGH, and NKMD.

It belongs to the TRAFAC class translation factor GTPase superfamily. Classic translation factor GTPase family. EF-G/EF-2 subfamily.

It localises to the cytoplasm. Functionally, catalyzes the GTP-dependent ribosomal translocation step during translation elongation. During this step, the ribosome changes from the pre-translocational (PRE) to the post-translocational (POST) state as the newly formed A-site-bound peptidyl-tRNA and P-site-bound deacylated tRNA move to the P and E sites, respectively. Catalyzes the coordinated movement of the two tRNA molecules, the mRNA and conformational changes in the ribosome. This is Elongation factor G from Chlamydia trachomatis serovar L2 (strain ATCC VR-902B / DSM 19102 / 434/Bu).